A 309-amino-acid chain; its full sequence is MKKLGTLLVLFLSVIALVACASGKKDATSGQKLKVVATNSIIADITKNIAGDKIDLHSIVPVGQDPHEYEPLPEDVKKTSQADLIFYNGINLETGGNAWFTKLVENAKKTENKDYFAVSEGVDVIYLEGQNEKGKEDPHAWLNLENGMIYAKNIAKQLIAKDPSNKEFYEKNLKDYTEKLDKLDKEAKEKFNNIPAEKKLIVTSEGCFKYFSKAYGVPSAYIWEINTEEEGTPEQIKTLVEKLRQTKVPSLFVESSVDDRPMKTVSQDTNIPIYAQIFTDSIAEEGKEGDSYYSMMKYNLDKIAEGLSK.

An N-terminal signal peptide occupies residues 1–19; that stretch reads MKKLGTLLVLFLSVIALVA. Cys-20 carries the N-palmitoyl cysteine lipid modification. The S-diacylglycerol cysteine moiety is linked to residue Cys-20. Mn(2+) is bound by residues His-67, His-139, Glu-205, and Asp-280.

This sequence belongs to the bacterial solute-binding protein 9 family. Lipoprotein receptor antigen (Lrai) subfamily.

It localises to the cell membrane. Part of the ATP-binding cassette (ABC) transport system PsaABC involved in manganese import. Binds manganese with high affinity and specificity and delivers it to the membrane permease for translocation into the cytoplasm. Also acts as an adhesin which is involved on adherence to extracellular matrix. In Streptococcus anginosus, this protein is Manganese ABC transporter substrate-binding lipoprotein PsaA (psaA).